The following is a 414-amino-acid chain: Tyrosine--tRNA ligase (414 aa).

Tyr-40 contacts L-tyrosine. Positions 45–54 (ATAASLHVGH) match the 'HIGH' region motif. The L-tyrosine site is built by Tyr-175 and Gln-179. The short motif at 235–239 (KMGKS) is the 'KMSKS' region element. ATP is bound at residue Lys-238. An S4 RNA-binding domain is found at 349–414 (LTVVQLLAQT…KKKHRMVQLG (66 aa)).

It belongs to the class-I aminoacyl-tRNA synthetase family. TyrS type 1 subfamily. As to quaternary structure, homodimer.

It localises to the cytoplasm. The catalysed reaction is tRNA(Tyr) + L-tyrosine + ATP = L-tyrosyl-tRNA(Tyr) + AMP + diphosphate + H(+). Catalyzes the attachment of tyrosine to tRNA(Tyr) in a two-step reaction: tyrosine is first activated by ATP to form Tyr-AMP and then transferred to the acceptor end of tRNA(Tyr). This Paracoccus denitrificans (strain Pd 1222) protein is Tyrosine--tRNA ligase.